The chain runs to 422 residues: MRIALLTMGSRGDVQPFVALGTGLRARGHEVVLGAPEALRPLVEQAGLEYRATPGDPDGFFTMPEVVETLRRGPAMRDLMKALPPAPEEYDQEVLDRIERAGEGVDLVVHAPLTVTTALGEPSTPWLSVNWWPNTSTWTFPAVESGQRRMGPLTPLYNRLTHWRAEREDWGWRRAEVNEFRGRRGLPPFGKSSPLRRLGHPRPHLYPFSPSVLPKPRDWPGQCHVTGYWFWDQPGWRPSPELEDFLADGEPPVLLTLGSTWPVHRQEEMVEYAVAAARGARRRLLLVGGPEGALPGDALRVPSADYSWLMPRTAAVVHHGGFGTTADAVRAGVPQVLVPVFADHPFWAARLRRMGTAARPVPLARMNREALAASVRTAVTDPAMAVRARRLGEAVAAERGVENACVLIEEWAETRTTAHTPG.

Belongs to the glycosyltransferase 28 family.

The catalysed reaction is 5-O-beta-D-mycaminosyltylonolide + dTDP-6-deoxy-alpha-D-allose = demethyllactenocin + dTDP + H(+). In terms of biological role, involved in the biosynthesis of the macrolide antibiotic tylosin derived from the polyketide lactone tylactone. Catalyzes the transfer of 6-deoxy-alpha-D-allose from dTDP-6-deoxy-alpha-D-allose to O-mycaminosyltylonolide (OMT) to yield demethyllactenocin. In Streptomyces fradiae (Streptomyces roseoflavus), this protein is O-mycaminosyltylonolide 6-deoxyallosyltransferase.